Here is a 625-residue protein sequence, read N- to C-terminus: Chaperone protein HtpG (625 aa).

The interval 1 to 330 (MAKQVQNFNA…SSDLSLNVSR (330 aa)) is a; substrate-binding. The segment at 331–545 (ELLQQDRQVT…SADPSAHMQK (215 aa)) is b. Residues 546–625 (LMAQMGKEYA…MVQAADSTKH (80 aa)) are c.

Belongs to the heat shock protein 90 family. As to quaternary structure, homodimer.

It is found in the cytoplasm. In terms of biological role, molecular chaperone. Has ATPase activity. This is Chaperone protein HtpG from Bdellovibrio bacteriovorus (strain ATCC 15356 / DSM 50701 / NCIMB 9529 / HD100).